Consider the following 545-residue polypeptide: MLEQRCRGPTAMGPAQPWLFSGPSQESSQPDRGLRYQGKSAQPRGQTPGKVHRCAHCRKRFPGWVALWLHARRCQARLPLPCHECNQRFRHAPFLALHLQVHASAVPDLGFICHLCGHSFRGWVALVLHLRAHSASKRPITCPECDRRFWRQKQLRAHLRRCQPPVPEARPFICGNCGRSFAQWDQLVVHKRVHVAEALEEAAAKALGPRPRGRPAAPRPGGDAVDRPFQCACCGKRFRHKPNLIAHRRVHTGERPHQCPECGKRFTNKPYLTSHRRIHTGEKPYPCTECGRRFRHKPNLLSHSKIHKRLEVSAQAAPHPESHQIAAEPMAQPALGVPLGSPRTPAEAPALLHSCSDCGRSFRLERFLRLHQRQHTGERPFACTECGKNFGKKTHLVAHSRVHSGERPFACEECGRRFSQGSHLAAHRRDHAPERPFVCPDCGKAFRHKPYLAAHRRIHTGEKPYVCPDCGKAFSQKSNLVSHRRIHTGERPYACPDCDRSFSQKSNLITHRKSHIRDGAFCCAICGQTFDDEDRLLMHQKKHDA.

The tract at residues 1–50 is disordered; the sequence is MLEQRCRGPTAMGPAQPWLFSGPSQESSQPDRGLRYQGKSAQPRGQTPGK. At S27 the chain carries Phosphoserine. K39 is subject to N6-acetyllysine. The C2H2-type 1; atypical zinc-finger motif lies at 52–74; that stretch reads HRCAHCRKRFPGWVALWLHARRC. 2 consecutive C2H2-type zinc fingers follow at residues 80–102 and 111–133; these read LPCHECNQRFRHAPFLALHLQVH and FICHLCGHSFRGWVALVLHLRAH. The C2H2-type 4; atypical zinc-finger motif lies at 140 to 162; it reads ITCPECDRRFWRQKQLRAHLRRC. 11 consecutive C2H2-type zinc fingers follow at residues 172–194, 229–251, 257–279, 285–307, 353–375, 381–403, 409–431, 437–459, 465–487, 493–515, and 521–543; these read FICGNCGRSFAQWDQLVVHKRVH, FQCACCGKRFRHKPNLIAHRRVH, HQCPECGKRFTNKPYLTSHRRIH, YPCTECGRRFRHKPNLLSHSKIH, HSCSDCGRSFRLERFLRLHQRQH, FACTECGKNFGKKTHLVAHSRVH, FACEECGRRFSQGSHLAAHRRDH, FVCPDCGKAFRHKPYLAAHRRIH, YVCPDCGKAFSQKSNLVSHRRIH, YACPDCDRSFSQKSNLITHRKSH, and FCCAICGQTFDDEDRLLMHQKKH. Residue K269 is modified to N6-acetyllysine.

In terms of assembly, homodimers and homomultimers. Found in a complex with RIP60 and RIP100.

The protein resides in the nucleus. The protein localises to the cytoplasm. Its subcellular location is the cytosol. Functionally, sequence-specific double-stranded DNA-binding protein. Binds ATT-rich and T-rich DNA sequences and facilitates DNA bending. May regulate the expression of genes involved in cellular fatty acid import, including SCARB1/CD36, and genes involved in lipid droplet formation. May regulate the expression of LCN2, and thereby influence iron metabolism and apoptosis-related pathways. May regulate the expression of genes involved in glucose transport. This chain is DNA-binding protein REPIN1 (Repin1), found in Mus musculus (Mouse).